The sequence spans 221 residues: GFP-like non-fluorescent chromoprotein (221 aa).

A cross-link (2-iminomethyl-5-imidazolinone (Gln-Gly)) is located at residues 62-64; that stretch reads QYG. Tyrosine 63 is subject to (E)-2,3-didehydrotyrosine.

It belongs to the GFP family. As to quaternary structure, homotetramer. Post-translationally, contains a chromophore consisting of modified amino acid residues. The chromophore is formed by autocatalytic backbone condensation between Xaa-N and Gly-(N+2), oxidation of Tyr-(N+1) to didehydrotyrosine, and formation of a double bond to the alpha-amino nitrogen of residue Xaa-N. Maturation of the chromophore requires nothing other than molecular oxygen.

Functionally, thought to play a role in photoprotection of the coral's resident symbiont microalgae's photosystems from photoinhibition caused by high light levels found near the surface of coral reefs. This Montipora efflorescens (Pore coral) protein is GFP-like non-fluorescent chromoprotein.